The following is a 643-amino-acid chain: Extracellular metalloproteinase 4 (643 aa).

The first 18 residues, 1 to 18 (MHGLMLAGLLALPLSVLG), serve as a signal peptide directing secretion. A propeptide spanning residues 19–254 (HPTESHSSGI…VHSVVDYVSA (236 aa)) is cleaved from the precursor. Residues 47-57 (TKSDAVPKQDG) are compositionally biased toward basic and acidic residues. The disordered stretch occupies residues 47–73 (TKSDAVPKQDGESFTTSSTGNDNSSSG). Residues 61-73 (TTSSTGNDNSSSG) show a composition bias toward low complexity. N-linked (GlcNAc...) asparagine glycans are attached at residues N271 and N420. H437 is a Zn(2+) binding site. E438 is a catalytic residue. H441 provides a ligand contact to Zn(2+). Residues N603 and N629 are each glycosylated (N-linked (GlcNAc...) asparagine).

Belongs to the peptidase M36 family. It depends on Zn(2+) as a cofactor.

Its subcellular location is the secreted. In terms of biological role, secreted metalloproteinase probably acting as a virulence factor. This Trichophyton rubrum (Athlete's foot fungus) protein is Extracellular metalloproteinase 4 (MEP4).